Consider the following 82-residue polypeptide: Small ribosomal subunit protein bS16 (82 aa).

The protein belongs to the bacterial ribosomal protein bS16 family.

The protein is Small ribosomal subunit protein bS16 of Clostridium botulinum (strain Okra / Type B1).